Here is a 70-residue protein sequence, read N- to C-terminus: Small, acid-soluble spore protein 1 (70 aa).

It belongs to the alpha/beta-type SASP family.

Its function is as follows. SASP are bound to spore DNA. They are double-stranded DNA-binding proteins that cause DNA to change to an a-like conformation. They protect the DNA backbone from chemical and enzymatic cleavage and are thus involved in dormant spore's high resistance to UV light. In Geobacillus stearothermophilus (Bacillus stearothermophilus), this protein is Small, acid-soluble spore protein 1 (sasP-1).